We begin with the raw amino-acid sequence, 1580 residues long: Adhesion G protein-coupled receptor L3 (1580 aa).

Residues 1–19 (MWPSQLLVFMMLLAPIIHG) form the signal peptide. Residues 20 to 949 (GKHSERHPAL…VHDLLLDVIT (930 aa)) lie on the Extracellular side of the membrane. The disordered stretch occupies residues 23-81 (SERHPALASPLRHAERGPGGALPPRHLLQQPAAERATAHRGPGPRGATRGVRGPGAHGA). Positions 103–192 (SCESYPIELR…KYLEVQYECV (90 aa)) constitute an SUEL-type lectin domain. 5 disulfides stabilise this stretch: Cys104-Cys134, Cys113-Cys191, Cys146-Cys178, Cys159-Cys165, and Cys203-Cys385. Asn161 is a glycosylation site (N-linked (GlcNAc...) asparagine). In terms of domain architecture, Olfactomedin-like spans 202–461 (LCPGLLKGVY…VVKYSLDFGP (260 aa)). The interval 317-347 (YHDTSPYRWGGKSDIDLAVDENGLWVIYATE) is interaction with FLRT3. The Ca(2+) site is built by Asp332, Asn380, Ala381, and Val435. The disordered stretch occupies residues 494-540 (EISTTGPLGTGSTTTSTTLRTTTWSPGRSTTPSVSGRRNRSTSTPSP). Low complexity predominate over residues 496 to 521 (STTGPLGTGSTTTSTTLRTTTWSPGR). Positions 522–539 (STTPSVSGRRNRSTSTPS) are enriched in polar residues. Residues Asn532, Asn617, Asn827, Asn840, Asn885, and Asn911 are each glycosylated (N-linked (GlcNAc...) asparagine). The GAIN-B domain maps to 756 to 935 (DIVRENTDNI…AVLMAHVEVK (180 aa)). 2 cysteine pairs are disulfide-bonded: Cys886–Cys917 and Cys905–Cys919. The segment at 886 to 935 (CSFWSYSKRTMTGYWSTQGCRLLTTNKTHTTCSCNHLTNFAVLMAHVEVK) is GPS. The segment at 923–939 (TNFAVLMAHVEVKHSDA) is stachel. The chain crosses the membrane as a helical span at residues 950-970 (WVGILLSLVCLLICIFTFCFF). The Cytoplasmic segment spans residues 971–978 (RGLQSDRN). Residues 979-999 (TIHKNLCISLFVAELLFLIGI) form a helical membrane-spanning segment. An N-linked (GlcNAc...) asparagine glycan is attached at Asn1000. Residues 1000 to 1007 (NRTDQPIA) lie on the Extracellular side of the membrane. The chain crosses the membrane as a helical span at residues 1008 to 1028 (CAVFAALLHFFFLAAFTWMFL). The Cytoplasmic segment spans residues 1029–1050 (EGVQLYIMLVEVFESEHSRRKY). Residues 1051–1071 (FYLVGYGMPALIVAVSAAVDY) traverse the membrane as a helical segment. Residues 1072–1088 (RSYGTDKVCWLRLDTYF) lie on the Extracellular side of the membrane. The chain crosses the membrane as a helical span at residues 1089-1109 (IWSFIGPATLIIMLNVIFLGI). Residues 1110-1142 (ALYKMFHHTAILKPESGCLDNINYEDNRPFIKS) are Cytoplasmic-facing. A helical membrane pass occupies residues 1143–1163 (WVIGAIALLCLLGLTWAFGLM). The Extracellular segment spans residues 1164 to 1169 (YINEST). Residue Asn1166 is glycosylated (N-linked (GlcNAc...) asparagine). The helical transmembrane segment at 1170–1190 (VIMAYLFTIFNSLQGMFIFIF) threads the bilayer. Over 1191–1580 (HCVLQKKVRK…KGPAHLVTSL (390 aa)) the chain is Cytoplasmic. Positions 1213 to 1238 (GRSTESSIGSGKTSGSRTPGRYSTGS) are disordered. Ser1254 bears the Phosphoserine mark. Residues 1555 to 1580 (FIVPPNKDGTPPEGSSKGPAHLVTSL) are disordered. Positions 1575-1580 (HLVTSL) match the PDZ-binding motif.

The protein belongs to the G-protein coupled receptor 2 family. LN-TM7 subfamily. In terms of assembly, heterodimer of 2 chains generated by proteolytic processing; the large extracellular N-terminal fragment and the membrane-bound C-terminal fragment predominantly remain associated and non-covalently linked. Interacts (via olfactomedin-like domain) with FLRT1 (via extracellular domain). Interacts (via olfactomedin-like domain) with FLRT2 (via extracellular domain). Interacts (via olfactomedin-like domain) with FLRT3 (via extracellular domain); the interaction is direct. Interacts (via extracellular domain) with TENM1. Interacts (via extracellular domain) with TENM2. Interacts (via extracellular domain) with TENM3. Identified in a complex with FLRT3 and UNC5B; does not interact with UNC5B by itself. Identified in a complex with FLRT3 and UNC5D; does not interact with UNC5D by itself. As to quaternary structure, interacts (via PDZ-binding motif) with SHANK3. Interacts (via PDZ-binding motif) with DLG4. In terms of processing, autoproteolytically processed at the GPS region of the GAIN-B domain; this cleavage modulates receptor activity. Brain-specific distribution but low levels are also detected in lung and spleen.

It localises to the cell membrane. The protein localises to the postsynaptic cell membrane. Its subcellular location is the cell projection. The protein resides in the axon. It is found in the cell junction. With respect to regulation, forms a heterodimer of 2 chains generated by proteolytic processing that remain associated through non-covalent interactions mediated by the GAIN-B domain. In the inactivated receptor, the Stachel sequence (also named stalk) is embedded in the GAIN-B domain, where it adopts a beta-strand conformation. On activation, the Stachel moves into the 7 transmembrane region and adopts a twisted hook-shaped configuration that forms contacts within the receptor, leading to coupling of a G-alpha protein, which activates signaling. The cleaved GAIN-B and N-terminal domains can then dissociate from the rest of the receptor. In terms of biological role, orphan adhesion G-protein coupled receptor (aGPCR), which mediates synapse specificity. Ligand binding causes a conformation change that triggers signaling via guanine nucleotide-binding proteins (G proteins) and modulates the activity of downstream effectors. ADGRL3 is coupled with different classes of G alpha proteins, such as G(12)/G(13), G(s), G(i) or G(q), depending on the context. Coupling to G(12)/G(13) G proteins, which mediates the activation Rho small GTPases is the most efficient. Following G-protein coupled receptor activation, associates with cell adhesion molecules that are expressed at the surface of adjacent cells to direct synapse specificity. Specifically mediates the establishment of Schaffer-collateral synapses formed by CA3-region axons on CA1-region pyramidal neurons in the hippocampus. Localizes to postsynaptic spines in excitatory synapses in the S.oriens and S.radiatum and interacts with presynaptic cell adhesion molecules FLRT3 and TENM2, promoting synapse formation. Plays a role in the development of glutamatergic synapses in the cortex. Important in determining the connectivity rates between the principal neurons in the cortex. Orphan adhesion G-protein coupled receptor (aGPCR), which mediates synapse specificity. Ligand binding causes a conformation change that triggers signaling via guanine nucleotide-binding proteins (G proteins) and modulates the activity of downstream effectors, such as adenylate cyclase. Isoform 1 is specifically coupled to G(s) G proteins and mediates activation of adenylate cyclase activity. Following G-protein coupled receptor activation, undergoes liquid-liquid phase transition, associates with (1) cell adhesion molecules that are expressed at the surface of adjacent cells, as well as (2) PDZ-containing proteins, such as SHANK3 and DLG4, in the cytoplasm to direct synapse formation. In Bos taurus (Bovine), this protein is Adhesion G protein-coupled receptor L3.